Reading from the N-terminus, the 50-residue chain is Photosystem I reaction center subunit IX (50 aa).

A helical membrane pass occupies residues 7 to 27; the sequence is YLSTAPVLAILCCSFLAGLVI.

This sequence belongs to the PsaJ family.

The protein localises to the plastid. It localises to the chloroplast thylakoid membrane. May help in the organization of the PsaE and PsaF subunits. This Pinus koraiensis (Korean pine) protein is Photosystem I reaction center subunit IX.